We begin with the raw amino-acid sequence, 380 residues long: Cytochrome b (380 aa).

Helical transmembrane passes span 34-54, 78-99, 114-134, and 179-199; these read FGSL…LLAA, WLIR…YMHV, WNTG…GYVL, and FFTL…IHLT. Residues H84 and H98 each coordinate heme b. Heme b contacts are provided by H183 and H197. Residue H202 coordinates a ubiquinone. The next 4 helical transmembrane spans lie at 227 to 247, 289 to 309, 321 to 341, and 348 to 368; these read LKDI…ALFS, LGGV…PLLH, LSQL…WVGS, and FMII…ILFP.

It belongs to the cytochrome b family. In terms of assembly, the cytochrome bc1 complex contains 11 subunits: 3 respiratory subunits (MT-CYB, CYC1 and UQCRFS1), 2 core proteins (UQCRC1 and UQCRC2) and 6 low-molecular weight proteins (UQCRH/QCR6, UQCRB/QCR7, UQCRQ/QCR8, UQCR10/QCR9, UQCR11/QCR10 and a cleavage product of UQCRFS1). This cytochrome bc1 complex then forms a dimer. Heme b is required as a cofactor.

It is found in the mitochondrion inner membrane. Component of the ubiquinol-cytochrome c reductase complex (complex III or cytochrome b-c1 complex) that is part of the mitochondrial respiratory chain. The b-c1 complex mediates electron transfer from ubiquinol to cytochrome c. Contributes to the generation of a proton gradient across the mitochondrial membrane that is then used for ATP synthesis. In Balearica pavonina (Black crowned-crane), this protein is Cytochrome b (MT-CYB).